The primary structure comprises 541 residues: MPRRKQSHPQPVKCEGVKVDTEDSFDEGPGALVLESDLLLGQDLEFEEEEEEDEGDGHNDQLMGFERDSEGDSQGARPGLPYGLSDDESGGGRALSAESEVEEPARGPGEARGERPGPACQLCGGPTGEGPCCGAGGPGGGPPLPPRLLYSCRLCAFVSHYSSHLKRHMQTHSGEKPFRCGRCPYASAQLVNLTRHTRTHTGEKPYRCPHCPFACSSLGNLRRHQRTHTGPPTPPCPTCGFRCCAPRPTRPPSPTEQEGTMPRRSEDALILPDLSLHVPPGGASFLPDCGQLRGEGESLCGTGSEPLPELLFPWTCRGCGQELEEGEGSRLGAAMCGRCMRGEAGGVATGGPQGPGDKGFACSLCPFATHYPNHLARHMKTHSGEKPFRCARCPYASAHLDNLKRHQRVHTGEKPYKCPLCPYACGNLANLKRHGRIHSGDKPFRCSLCNYSCNQSMNLKRHMLRHTGEKPFRCATCAYTTGHWDNYKRHQKVHGHGGAGGPGLSAPEGWAPPHSPPSVLSTRGPAALGATGSRALHSDSP.

The interval methionine 1–proline 118 is disordered. Acidic residues predominate over residues leucine 44 to glycine 55. Phosphoserine is present on residues serine 85 and serine 96. Over residues glutamate 103 to arginine 115 the composition is skewed to basic and acidic residues. 8 C2H2-type zinc fingers span residues tyrosine 150–histidine 172, phenylalanine 178–histidine 200, tyrosine 206–histidine 228, phenylalanine 360–histidine 382, phenylalanine 388–histidine 410, tyrosine 416–histidine 438, phenylalanine 444–histidine 466, and phenylalanine 472–histidine 494. Residues lysine 492–proline 541 are disordered.

Belongs to the krueppel C2H2-type zinc-finger protein family. Binds DNA. Can associate with the proximal promoter regions of PAX6 and SP4, and their known targets including ARR3, RHO, OPN1MW2 and OPN1SW. Widely expressed. In the eye, expression is greatest in the retina and least in the lens and cornea.

It localises to the nucleus. In terms of biological role, transcriptional regulator that plays a role in retinal development and maintenance. This is Zinc finger protein 513 (Znf513) from Mus musculus (Mouse).